The primary structure comprises 550 residues: Zinc finger protein squeeze (550 aa).

A compositionally biased stretch (low complexity) spans 73 to 105; sequence QQQQQQQQQEMLQQQQQHQAHQEQQQQQQQQQQ. The segment at 73-179 is disordered; it reads QQQQQQQQQE…GGGGGDGDQS (107 aa). Basic residues predominate over residues 106–117; it reads QHHHQQQQHHLK. The segment covering 141–156 has biased composition (polar residues); the sequence is RSPQRPLMSSGSNASS. Over residues 164-176 the composition is skewed to gly residues; sequence SGGGPGGGGGGDG. 5 C2H2-type zinc fingers span residues 182 to 204, 210 to 232, 238 to 262, 268 to 290, and 299 to 321; these read YKCA…TRIH, YRCE…IRTH, YKCR…SRCH, FKCN…IPKH, and HICN…LQKH. The disordered stretch occupies residues 399–485; sequence LQQHQQQQQQ…VPPSHLQQHR (87 aa). Positions 400–416 are enriched in low complexity; it reads QQHQQQQQQQQQDMLQQ. A Phosphothreonine modification is found at T424. Phosphoserine occurs at positions 428 and 430. Residues 444-460 show a composition bias toward low complexity; that stretch reads QTTPQHHLQQQQQQQQP. Y494 and Y496 each carry phosphotyrosine.

This sequence belongs to the krueppel C2H2-type zinc-finger protein family. Interacts with nab; which acts as a coactivator. Interacts with ap.

The protein localises to the nucleus. In terms of biological role, transcription factor involved in neuronal fate specification. First required in embryonic CNS development to define the number of cells that express apterous (ap) in the ap thoracic cluster of interneurons. Later on, it plays a central role in the combinatorial code of transcription factors that specifies the fate of the Tv neuron in the ap cluster by participating in the transcription regulation of FMRFa in Tv cells. Also required for projection neuron dendritic targeting. The chain is Zinc finger protein squeeze (sqz) from Drosophila pseudoobscura pseudoobscura (Fruit fly).